The following is a 369-amino-acid chain: Quinolinate synthase (369 aa).

His47 and Ser64 together coordinate iminosuccinate. Cys111 lines the [4Fe-4S] cluster pocket. Residues 142-144 (YVN) and Ser163 contribute to the iminosuccinate site. Residue Cys231 coordinates [4Fe-4S] cluster. Residues 257–259 (HPE) and Thr274 each bind iminosuccinate. Cys321 lines the [4Fe-4S] cluster pocket.

It belongs to the quinolinate synthase family. Type 3 subfamily. It depends on [4Fe-4S] cluster as a cofactor.

Its subcellular location is the cytoplasm. It catalyses the reaction iminosuccinate + dihydroxyacetone phosphate = quinolinate + phosphate + 2 H2O + H(+). Its pathway is cofactor biosynthesis; NAD(+) biosynthesis; quinolinate from iminoaspartate: step 1/1. Catalyzes the condensation of iminoaspartate with dihydroxyacetone phosphate to form quinolinate. The sequence is that of Quinolinate synthase from Bacillus licheniformis (strain ATCC 14580 / DSM 13 / JCM 2505 / CCUG 7422 / NBRC 12200 / NCIMB 9375 / NCTC 10341 / NRRL NRS-1264 / Gibson 46).